Here is a 143-residue protein sequence, read N- to C-terminus: Nucleoside diphosphate kinase (143 aa).

The ATP site is built by Lys11, Phe59, Arg87, Thr93, Arg104, and Asn114. The active-site Pros-phosphohistidine intermediate is the His117.

Belongs to the NDK family. As to quaternary structure, homotetramer. Mg(2+) is required as a cofactor.

It is found in the cytoplasm. The catalysed reaction is dZDP + ATP = dZTP + ADP. The enzyme catalyses a 2'-deoxyribonucleoside 5'-diphosphate + ATP = a 2'-deoxyribonucleoside 5'-triphosphate + ADP. It catalyses the reaction a ribonucleoside 5'-diphosphate + ATP = a ribonucleoside 5'-triphosphate + ADP. The protein operates within purine metabolism. In terms of biological role, major role in the synthesis of nucleoside triphosphates other than ATP. The ATP gamma phosphate is transferred to the NDP beta phosphate via a ping-pong mechanism, using a phosphorylated active-site intermediate. Its function is as follows. (Microbial infection) Catalyzes the phosphorylation of dZDP to dZTP, when the bacterium is infected by a phage that produces the substrate for the synthesis of dZTP (2- amino-2'-deoxyadenosine 5'-triphosphate), which is then used by the phage as a DNA polymerase substrate. This Salmonella paratyphi C (strain RKS4594) protein is Nucleoside diphosphate kinase.